A 206-amino-acid polypeptide reads, in one-letter code: Guanylate kinase (206 aa).

Positions 5 to 184 (GMLIVLSGPS…AAERIKAIIR (180 aa)) constitute a Guanylate kinase-like domain. 12–19 (GPSGVGKG) provides a ligand contact to ATP.

It belongs to the guanylate kinase family.

It localises to the cytoplasm. It catalyses the reaction GMP + ATP = GDP + ADP. Its function is as follows. Essential for recycling GMP and indirectly, cGMP. The polypeptide is Guanylate kinase (Lactiplantibacillus plantarum (strain ATCC BAA-793 / NCIMB 8826 / WCFS1) (Lactobacillus plantarum)).